A 252-amino-acid polypeptide reads, in one-letter code: Short chain dehydrogenase andC (252 aa).

An N-terminal signal peptide occupies residues 1–25; sequence MGFLQDKVVIITGAAAGIGLATATA. The NADP(+) site is built by Ile11, Asp57, and Arg119. Catalysis depends on Ser137, which acts as the Proton donor. Residues Tyr151 and Lys155 each coordinate NADP(+). Tyr151 acts as the Proton acceptor in catalysis. The active-site Lowers pKa of active site Tyr is the Lys155.

It belongs to the short-chain dehydrogenases/reductases (SDR) family.

Its pathway is secondary metabolite biosynthesis; terpenoid biosynthesis. Functionally, short chain dehydrogenase; part of the gene cluster that mediates the biosynthesis of anditomin, a fungal meroterpenoid. The first step of the pathway is the synthesis of 3,5-dimethylorsellinic acid (DMOA) by the polyketide synthase andM. DMOA is then converted to the phthalide compound 5,7-dihydroxy-4,6-dimethylphthalide (DHDMP) by the cytochrome P450 monooxygenase andK, which is further prenylated by the prenyltransferase andD to yield farnesyl-DHDMP. Further epoxidation by the FAD-dependent monooxygenase andE leads to epoxyfarnesyl-DHDMP. The next step involves the terpene cyclase andB that converts epoxyfarnesyl-DHDMP into preandiloid A through opening of the epoxide ring followed by the cyclization of the farnesyl moiety. Preandiloid A is in turn oxidized at the C-3 hydroxyl group to yield preandiloid B by the dehydrogenase andC. The dioxygenase andA is solely responsible for the dehydrogenation of preandiloid B leading to the enone preandiloid C, as well as for the intriguing structural rearrangement to generate the bicyclo[2.2.2]octane core, transforming preandiloid C into andiconin. FAD-binding monooxygenase andJ then produces andilesin D which is reduced by dehydrogenase andI to yield andilesin A. Action of acetyltransferase andG followed by a spontaneous acetate elimination leads then to andilesin B, which is in turn substrate of the short chain dehydrogenase andH to yield andilesin C. Finally, the dioxygenase andF catalyzes the transformation of andilesin C to anditomin. The sequence is that of Short chain dehydrogenase andC from Emericella variicolor (Aspergillus stellatus).